The sequence spans 467 residues: Interleukin-6 receptor subunit alpha (467 aa).

An N-terminal signal peptide occupies residues 1–19 (MLAVGCALLTALLAAPGMA). Residues 20–112 (LAPRGCSKLE…AGSVRLLVDA (93 aa)) form the Ig-like C2-type domain. At 20–365 (LAPRGCSKLE…VQDSASVPLP (346 aa)) the chain is on the extracellular side. Intrachain disulfides connect Cys25–Cys193, Cys47–Cys96, Cys121–Cys132, and Cys165–Cys176. Asn55 and Asn93 each carry an N-linked (GlcNAc...) asparagine glycan. 2 Fibronectin type-III domains span residues 113-217 (PPEE…LQPD) and 218-316 (PPVN…IPWT). Residues Asn221 and Asn245 are each glycosylated (N-linked (GlcNAc...) asparagine). Positions 303-307 (WSEWS) match the WSXWS motif motif. The segment at 315–357 (WTESRSSPAETELPLSTQAPTTNEDDEDISSKESANATSLPVQ) is disordered. 2 stretches are compositionally biased toward polar residues: residues 317-336 (ESRSSPAETELPLSTQAPTT) and 346-357 (KESANATSLPVQ). The N-linked (GlcNAc...) asparagine glycan is linked to Asn350. O-linked (GlcNAc) threonine glycosylation occurs at Thr352. A helical membrane pass occupies residues 366–386 (TFLVAGGSLAFGTLLCIGIIL). Residues 387-467 (RFKKTGQLQA…VSNRDYFFPR (81 aa)) lie on the Cytoplasmic side of the membrane. Positions 428 to 467 (ISPPVSPNSLGDNTSRNSRPEARGPQSPYDVSNRDYFFPR) are disordered.

This sequence belongs to the type I cytokine receptor family. Type 3 subfamily. In terms of assembly, component of a hexamer of two molecules each of IL6, IL6R and IL6ST; first binds to IL6 to associate with the signaling subunit IL6ST. Interacts (via N-terminal ectodomain) with SORL1; this interaction may affect IL6-binding to IL6R, hence decrease IL6 'classic-signaling'. As to quaternary structure, also interacts with SORL1; this interaction leads to soluble IL6R internalization. May form a trimeric complex with the soluble SORL1 ectodomain and circulating IL6 receptor; this interaction might stabilize circulating IL6, hence promote IL6 'trans-signaling'. A short soluble form is also released from the membrane by proteolysis. The sIL6R is formed by limited proteolysis of membrane-bound receptors, a process referred to as ectodomain shedding. mIL6R is cleaved by the proteases ADAM10 and ADAM17. Post-translationally, glycosylated. Glycosylation is dispensable for transport, signaling, and cell-surface turnover. Glycosylation at Asn-55 is a protease-regulatory exosite. Glycosylation is required for ADAM17-mediated proteolysis. As to expression, expressed in liver.

The protein localises to the cell membrane. Its subcellular location is the secreted. Its activity is regulated as follows. Classic and trans-signaling are both inhibited by tocilizumab, a humanized monoclonal antibody that blocks interleukin IL6R signaling. Part of the receptor for interleukin 6. Binds to IL6 with low affinity, but does not transduce a signal. Signal activation necessitate an association with IL6ST. Activation leads to the regulation of the immune response, acute-phase reactions and hematopoiesis. The interaction with membrane-bound IL6R and IL6ST stimulates 'classic signaling', the restricted expression of the IL6R limits classic IL6 signaling to only a few tissues such as the liver and some cells of the immune system. Whereas the binding of IL6 and soluble IL6R to IL6ST stimulates 'trans-signaling'. Alternatively, 'cluster signaling' occurs when membrane-bound IL6:IL6R complexes on transmitter cells activate IL6ST receptors on neighboring receiver cells. Its function is as follows. Signaling via the membrane-bound IL6R is mostly regenerative and anti-inflammatory. Drives naive CD4(+) T cells to the Th17 lineage, through 'cluster signaling' by dendritic cells. In terms of biological role, soluble form of IL6 receptor (sIL6R) that acts as an agonist of IL6 activity. The IL6:sIL6R complex (hyper-IL6) binds to IL6ST/gp130 on cell surfaces and induces signaling also on cells that do not express membrane-bound IL6R in a process called IL6 'trans-signaling'. sIL6R is causative for the pro-inflammatory properties of IL6 and an important player in the development of chronic inflammatory diseases. In complex with IL6, is required for induction of VEGF production. Plays a protective role during liver injury, being required for maintenance of tissue regeneration. 'Trans-signaling' in central nervous system regulates energy and glucose homeostasis. The chain is Interleukin-6 receptor subunit alpha (IL6R) from Sus scrofa (Pig).